We begin with the raw amino-acid sequence, 70 residues long: MAIEKSVASASIAEVIDRILDKGVVIDAFVRVSLVGIELIAIEVRAVVASIETWLKYAEAVGLTVDPATT.

This sequence belongs to the gas vesicle GvpA family. The gas vesicle shell is 2 nm thick and consists of a single layer of this protein. It forms helical ribs nearly perpendicular to the long axis of the vesicle.

Its subcellular location is the gas vesicle shell. Gas vesicles are hollow, gas filled proteinaceous nanostructures found in some microorganisms. During planktonic growth they allow positioning of the organism at a favorable depth for light or nutrient acquisition. GvpA forms the protein shell. The chain is Gas vesicle protein A from Cereibacter sphaeroides (strain ATCC 17023 / DSM 158 / JCM 6121 / CCUG 31486 / LMG 2827 / NBRC 12203 / NCIMB 8253 / ATH 2.4.1.) (Rhodobacter sphaeroides).